The chain runs to 705 residues: MGQEKHVFTIDWAGRQLTVETGQLAKQANGAVLVRYGDTAVLSSATASKEPKPLDFFPLTVNYEERLYAVGKIPGGFIKREGRPSEKAILASRLIDRPIRPLFADGFRNEVQVISIVMSVDQDCSSEMAAMFGSSLALCVSDIPFEGPIAGVTVGRVDGKFIINPNVEQLEQSDINLVVAGTKDAINMVEAGADEVPEETMLEAIMYGHQEIKRLIEFQEEIVKAVGKAKIDIPLYEVDQTLADEVKALAETDLLKAIQVHEKHAREDAISAVKKAVVEKFEEEDRDEATIKQAKDVLNKLVKNEVRRLITEEKVRPDGRGVDQIRPLSSEVGLLPRTHGSGLFTRGQTQALSICTLGALGDVQILDGLGVEESKRFMHHYNFPQFSVGETGPMRGPGRREIGHGALGERALEPVIPSEKDFPYTVRLVSEVLESNGSTSQASICASTLAMMDAGVPIKAPVAGIAMGLVKSGEYYTVLTDIQGMEDALGDMDFKVAGTSKGVTALQMDIKIDGLSKDILEEALQQAKKGRMEILDSMLSTIPTSRGELSRYAPKILTMKINPDKIRDVIGPSGKQINKIIEDTGVKIDIEQDGTIFISSTEEDMNQKAKKIIEDLVREVEVGQLYLGKVKRIEKFGAFLEIFSGKDGLVHISELALDRVGKVEDVVKIGDELLVKVTEIDKQGRVNLSRKAVLREEKEKEEKQS.

Mg(2+)-binding residues include aspartate 487 and aspartate 493. One can recognise a KH domain in the interval 554-613; sequence PKILTMKINPDKIRDVIGPSGKQINKIIEDTGVKIDIEQDGTIFISSTEEDMNQKAKKII. In terms of domain architecture, S1 motif spans 623–691; sequence GQLYLGKVKR…KQGRVNLSRK (69 aa).

The protein belongs to the polyribonucleotide nucleotidyltransferase family. Mg(2+) serves as cofactor.

It is found in the cytoplasm. It carries out the reaction RNA(n+1) + phosphate = RNA(n) + a ribonucleoside 5'-diphosphate. Involved in mRNA degradation. Catalyzes the phosphorolysis of single-stranded polyribonucleotides processively in the 3'- to 5'-direction. The polypeptide is Polyribonucleotide nucleotidyltransferase (Bacillus pumilus (strain SAFR-032)).